A 272-amino-acid polypeptide reads, in one-letter code: Endoplasmic reticulum resident protein 27 (272 aa).

An N-terminal signal peptide occupies residues 1-25 (MKITRSRCLILSFVLVCGLVPEVTA). A Thioredoxin domain is found at 39–152 (EPIWLTDVPA…WVTEYSPMIA (114 aa)). N-linked (GlcNAc...) asparagine glycans are attached at residues N91 and N100. Residues 230 to 233 (DKWD) form a PDIA3-binding site region. The short motif at 269–272 (KEEL) is the Prevents secretion from ER element.

This sequence belongs to the protein disulfide isomerase family. Interacts with PDIA3.

The protein localises to the endoplasmic reticulum lumen. In terms of biological role, specifically binds unfolded proteins and may recruit protein disulfide isomerase PDIA3 to unfolded substrates. Binds protein substrates via a hydrophobic pocket in the C-terminal domain. May play a role in the unfolded stress response. This Mus musculus (Mouse) protein is Endoplasmic reticulum resident protein 27 (Erp27).